A 346-amino-acid polypeptide reads, in one-letter code: Probable choline kinase 3 (346 aa).

ATP is bound by residues Arg71, Gln207, and Asp224.

The protein belongs to the choline/ethanolamine kinase family.

It catalyses the reaction choline + ATP = phosphocholine + ADP + H(+). It functions in the pathway phospholipid metabolism; phosphatidylcholine biosynthesis; phosphocholine from choline: step 1/1. Its function is as follows. Involved in phospholipid biosynthesis. Catalyzes the first step in phosphatidylcholine biosynthesis. The polypeptide is Probable choline kinase 3 (Arabidopsis thaliana (Mouse-ear cress)).